The primary structure comprises 77 residues: U14-theraphotoxin-Cg1b (77 aa).

The signal sequence occupies residues 1-21; the sequence is MKTSVLLVILGIAAITVQCTA. Residues 22-49 constitute a propeptide that is removed on maturation; it reads SESVEQDSLRTFVDAVLGWNAEMASEAR. 3 cysteine pairs are disulfide-bonded: cysteine 50/cysteine 64, cysteine 57/cysteine 69, and cysteine 63/cysteine 75.

The protein belongs to the neurotoxin 10 (Hwtx-1) family. 65 (Jztx-21) subfamily. In terms of tissue distribution, expressed by the venom gland.

Its subcellular location is the secreted. In terms of biological role, probable ion channel inhibitor. This is U14-theraphotoxin-Cg1b from Chilobrachys guangxiensis (Chinese earth tiger tarantula).